Consider the following 345-residue polypeptide: Phosphoribosylformylglycinamidine cyclo-ligase (345 aa).

It belongs to the AIR synthase family.

It is found in the cytoplasm. It catalyses the reaction 2-formamido-N(1)-(5-O-phospho-beta-D-ribosyl)acetamidine + ATP = 5-amino-1-(5-phospho-beta-D-ribosyl)imidazole + ADP + phosphate + H(+). It participates in purine metabolism; IMP biosynthesis via de novo pathway; 5-amino-1-(5-phospho-D-ribosyl)imidazole from N(2)-formyl-N(1)-(5-phospho-D-ribosyl)glycinamide: step 2/2. The sequence is that of Phosphoribosylformylglycinamidine cyclo-ligase from Escherichia coli O127:H6 (strain E2348/69 / EPEC).